The sequence spans 314 residues: Deoxyribonuclease-1-like 1 (314 aa).

An N-terminal signal peptide occupies residues 1–37 (MPFGQPGFLWRVPDAHIAMRGLVMAPLLILLVGGTEA). Asparagine 102 is a glycosylation site (N-linked (GlcNAc...) asparagine). Glutamate 113 is a catalytic residue. Asparagine 133 carries N-linked (GlcNAc...) asparagine glycosylation. Histidine 164 is an active-site residue. Cysteine 203 and cysteine 240 form a disulfide bridge. An N-linked (GlcNAc...) asparagine glycan is attached at asparagine 239.

This sequence belongs to the DNase I family. In terms of tissue distribution, highly expressed in heart and skeletal muscles. Low expression in brain and thymus. Intermediated expression in other tissues.

The protein resides in the endoplasmic reticulum. The protein is Deoxyribonuclease-1-like 1 (Dnase1l1) of Mus musculus (Mouse).